The following is a 493-amino-acid chain: MASGILVNVKEEVTCPICLELLTQPLSLDCGHSFCQACLTANHKTSMPDGERSCPVCRISYQHKNIRPNRHVANIVEKLREVKLSPEEGQKVDHCARHGEKLLLFCREDRKVICWLCERSQEHRGHHTFLMEEVAQEYQVKLQAALQMLRQKQQEAEQLEADIREEKASWKTQIQYDKTNILADFEQLRHILDWVESNELQNLEKEEKDVLRRLMKSEIEMVQQTQSVRELISDLEHRLQGSVMELLQGVDGVIKRMKNMTLKKPETFPKNKRRVFRAADLQVTLEVLRELRDVRRYWVDVTVAPNNISYAVISEDMRQVSSPEPQIIYEAQGTISQTFVNFNYCTGILGSQSITSGKHYWEVDVSKKSAWILGVCAGFQPDAMYNIEQNENYQPKYGYWVIGLEEGVKCNAFQDGSSHTPSAPFIVPLSVKICPDRVGVFLDYEACTVSFFNITNHGFLIYKFSHCSFSQPVFPYLNPRKCTVPMTLCSPSS.

Residue Ala-2 is modified to N-acetylalanine. The RING-type zinc finger occupies 15–58 (CPICLELLTQPLSLDCGHSFCQACLTANHKTSMPDGERSCPVCR). Ser-85 is subject to Phosphoserine. A B box-type zinc finger spans residues 90–131 (QKVDHCARHGEKLLLFCREDRKVICWLCERSQEHRGHHTFLM). Zn(2+) contacts are provided by Cys-95, His-98, Cys-117, and His-123. Positions 130–240 (LMEEVAQEYQ…LISDLEHRLQ (111 aa)) form a coiled coil. A required for interaction with GABARAP and for autophagy region spans residues 185–198 (FEQLRHILDWVESN). A B30.2/SPRY domain is found at 281–493 (LQVTLEVLRE…VPMTLCSPSS (213 aa)).

Belongs to the TRIM/RBCC family. As to quaternary structure, can form homodimers and homotrimers. In addition to lower-order dimerization, also exhibits a higher-order multimerization and both low- and high-order multimerizations are essential for its restriction activity. Interacts with BTBD1 and BTBD2. Interacts with PSMC4, PSMC5, PSMD7 and HSPA8/HSC70. Interacts (via B30.2/SPRY domain) with HSPA1A/B. Interacts with PSMC2, MAP3K7/TAK1, TAB2 and TAB3. Interacts with SQSTM1. Interacts with TRIM6 and TRIM34. Interacts with ULK1 (phosphorylated form), GABARAP, GABARAPL1, GABARAPL2, MAP1LC3A, MAP1LC3C and BECN1. In terms of processing, degraded in a proteasome-independent fashion in the absence of viral infection but in a proteasome-dependent fashion following exposure to restriction sensitive virus. Autoubiquitinated in a RING finger- and UBE2D2-dependent manner. Monoubiquitinated by TRIM21. Deubiquitinated by Yersinia YopJ. Ubiquitination may not lead to proteasomal degradation.

It localises to the cytoplasm. It is found in the nucleus. The catalysed reaction is S-ubiquitinyl-[E2 ubiquitin-conjugating enzyme]-L-cysteine + [acceptor protein]-L-lysine = [E2 ubiquitin-conjugating enzyme]-L-cysteine + N(6)-ubiquitinyl-[acceptor protein]-L-lysine.. The protein operates within protein modification; protein ubiquitination. In terms of biological role, capsid-specific restriction factor that prevents infection from non-host-adapted retroviruses. Blocks viral replication early in the life cycle, after viral entry but before reverse transcription. In addition to acting as a capsid-specific restriction factor, also acts as a pattern recognition receptor that activates innate immune signaling in response to the retroviral capsid lattice. Binding to the viral capsid triggers its E3 ubiquitin ligase activity, and in concert with the heterodimeric ubiquitin conjugating enzyme complex UBE2V1-UBE2N (also known as UBC13-UEV1A complex) generates 'Lys-63'-linked polyubiquitin chains, which in turn are catalysts in the autophosphorylation of the MAP3K7/TAK1 complex (includes TAK1, TAB2, and TAB3). Activation of the MAP3K7/TAK1 complex by autophosphorylation results in the induction and expression of NF-kappa-B and MAPK-responsive inflammatory genes, thereby leading to an innate immune response in the infected cell. Plays a role in regulating autophagy through activation of autophagy regulator BECN1 by causing its dissociation from its inhibitors BCL2 and TAB2. In Hylobates lar (Lar gibbon), this protein is Tripartite motif-containing protein 5 (TRIM5).